The primary structure comprises 241 residues: Superoxide dismutase [Mn] 2, mitochondrial (241 aa).

H60, H108, D197, and H201 together coordinate Mn(2+).

The protein belongs to the iron/manganese superoxide dismutase family. In terms of assembly, homotetramer. The cofactor is Mn(2+).

The protein resides in the mitochondrion matrix. It carries out the reaction 2 superoxide + 2 H(+) = H2O2 + O2. In terms of biological role, destroys superoxide anion radicals which are normally produced within the cells and which are toxic to biological systems. The sequence is that of Superoxide dismutase [Mn] 2, mitochondrial (MSD2) from Arabidopsis thaliana (Mouse-ear cress).